Consider the following 446-residue polypeptide: Phosphoglucosamine mutase (446 aa).

The active-site Phosphoserine intermediate is the Ser-88. The Mg(2+) site is built by Ser-88, Asp-231, Asp-233, and Asp-235. Phosphoserine is present on Ser-88.

The protein belongs to the phosphohexose mutase family. Requires Mg(2+) as cofactor. Post-translationally, activated by phosphorylation.

The catalysed reaction is alpha-D-glucosamine 1-phosphate = D-glucosamine 6-phosphate. In terms of biological role, catalyzes the conversion of glucosamine-6-phosphate to glucosamine-1-phosphate. This Methanococcus vannielii (strain ATCC 35089 / DSM 1224 / JCM 13029 / OCM 148 / SB) protein is Phosphoglucosamine mutase.